Here is a 338-residue protein sequence, read N- to C-terminus: Ferrochelatase (338 aa).

Fe cation contacts are provided by His207 and Glu293.

Belongs to the ferrochelatase family.

It is found in the cytoplasm. It carries out the reaction heme b + 2 H(+) = protoporphyrin IX + Fe(2+). Its pathway is porphyrin-containing compound metabolism; protoheme biosynthesis; protoheme from protoporphyrin-IX: step 1/1. In terms of biological role, catalyzes the ferrous insertion into protoporphyrin IX. The sequence is that of Ferrochelatase from Shewanella denitrificans (strain OS217 / ATCC BAA-1090 / DSM 15013).